Here is a 755-residue protein sequence, read N- to C-terminus: Xaa-Pro dipeptidyl-peptidase (755 aa).

Residues S348, D468, and H498 each act as charge relay system in the active site.

Belongs to the peptidase S15 family. In terms of assembly, homodimer.

The protein localises to the cytoplasm. It carries out the reaction Hydrolyzes Xaa-Pro-|- bonds to release unblocked, N-terminal dipeptides from substrates including Ala-Pro-|-p-nitroanilide and (sequentially) Tyr-Pro-|-Phe-Pro-|-Gly-Pro-|-Ile.. Functionally, removes N-terminal dipeptides sequentially from polypeptides having unsubstituted N-termini provided that the penultimate residue is proline. This is Xaa-Pro dipeptidyl-peptidase from Streptococcus thermophilus (strain ATCC BAA-491 / LMD-9).